An 85-amino-acid chain; its full sequence is uncharacterized protein (85 aa).

Positions 17 to 53 (KKRYEMLVQELLKEDDEEREKILAEELELLLDFLKKA) form a coiled coil.

This is an uncharacterized protein from Archaeoglobus fulgidus (strain ATCC 49558 / DSM 4304 / JCM 9628 / NBRC 100126 / VC-16).